The chain runs to 63 residues: UPF0337 protein Atu0782 (63 aa).

The interval 1–63 (MGSTSDKIAG…DAVKGAVDRM (63 aa)) is disordered. Basic and acidic residues predominate over residues 51 to 63 (KAKDAVKGAVDRM).

The protein belongs to the UPF0337 (CsbD) family.

This Agrobacterium fabrum (strain C58 / ATCC 33970) (Agrobacterium tumefaciens (strain C58)) protein is UPF0337 protein Atu0782.